A 64-amino-acid chain; its full sequence is Delta-buthitoxin-Hj2a (64 aa).

4 cysteine pairs are disulfide-bonded: Cys12–Cys63, Cys16–Cys36, Cys22–Cys46, and Cys26–Cys48. Arginine amide is present on Arg64.

The protein belongs to the long (4 C-C) scorpion toxin superfamily. Sodium channel inhibitor family. Alpha subfamily. Expressed by the venom gland.

Its subcellular location is the secreted. Its function is as follows. This non-amidated recombinant toxin slows fast inactivation on Nav1.1/SCN1A (EC(50)=52.8 nM), Nav1.4/SN4A (EC(50)=32 nM), Nav1.5/SCN5A (EC(50)=116.7 nM), Nav1.6/SCN8A (EC(50)=46.3 nM), and Nav1.7/SCN9A (EC(50)=147.4 nM) voltage-gated sodium channels. On Nav1.1/SCN1A channel, acts as an agonist by inducing a shift in both the voltage dependence of channel inactivation (alpha-toxin activity) and activation (beta-toxin activity). This chain is Delta-buthitoxin-Hj2a, found in Hottentotta judaicus (Black scorpion).